An 844-amino-acid chain; its full sequence is Beta-mannosidase B (844 aa).

E432 functions as the Proton donor in the catalytic mechanism. N723 is a glycosylation site (N-linked (GlcNAc...) asparagine).

It belongs to the glycosyl hydrolase 2 family. Beta-mannosidase B subfamily.

It carries out the reaction Hydrolysis of terminal, non-reducing beta-D-mannose residues in beta-D-mannosides.. It participates in glycan metabolism; N-glycan degradation. Its function is as follows. Exoglycosidase that cleaves the single beta-linked mannose residue from the non-reducing end of beta-mannosidic oligosaccharides of various complexity and length. Prefers mannobiose over mannotriose and has no activity against polymeric mannan. Is also severely restricted by galactosyl substitutions at the +1 subsite. The polypeptide is Beta-mannosidase B (mndB) (Aspergillus flavus (strain ATCC 200026 / FGSC A1120 / IAM 13836 / NRRL 3357 / JCM 12722 / SRRC 167)).